The sequence spans 272 residues: Proteasome assembly chaperone 1 (272 aa).

The protein belongs to the PSMG1 family. As to quaternary structure, forms a heterodimer with psmg2.

Functionally, chaperone protein which promotes assembly of the 20S proteasome as part of a heterodimer with psmg2. In Dictyostelium discoideum (Social amoeba), this protein is Proteasome assembly chaperone 1 (psmG1).